The following is a 426-amino-acid chain: Histone-binding protein RBBP7 (426 aa).

7 WD repeats span residues 47–123, 129–174, 182–218, 229–270, 276–313, 319–370, and 377–404; these read QWLP…KINH, RARY…LRLR, GLSWNPNLSGNLLSASDDHTICLWDISGAPKEGKIVD, VVED…HSVD, VNCLSFNPYSEFILATGSADKTVALWDLRNLKLKLHSF, EIFQ…LFIH, and ISDFSWNPNEPWVICSVSEDNIMQVWQM.

Belongs to the WD repeat RBAP46/RBAP48/MSI1 family. Binds directly to helix 1 of the histone fold of histone H4, a region that is not accessible when H4 is in chromatin.

It is found in the nucleus. In terms of biological role, core histone-binding subunit that may target chromatin remodeling factors, histone acetyltransferases and histone deacetylases to their histone substrates in a manner that is regulated by nucleosomal DNA. Component of several complexes which regulate chromatin metabolism. The sequence is that of Histone-binding protein RBBP7 (rbbp7) from Danio rerio (Zebrafish).